The chain runs to 324 residues: Lactonase drp35 (324 aa).

Positions 47, 109, 111, 129, 132, 134, 137, 184, 235, and 236 each coordinate Ca(2+). Asp-235 (proton donor) is an active-site residue.

This sequence belongs to the SMP-30/CGR1 family. It depends on Ca(2+) as a cofactor.

Its subcellular location is the cytoplasm. Its function is as follows. Exhibits lactonase activity. Acts in cells with perturbed membrane integrity and is possibly related to the membrane homeostasis. The protein is Lactonase drp35 (drp35) of Staphylococcus aureus (strain MW2).